A 273-amino-acid polypeptide reads, in one-letter code: Ribosomal RNA small subunit methyltransferase A (273 aa).

Positions 19, 21, 46, 71, 94, and 117 each coordinate S-adenosyl-L-methionine.

Belongs to the class I-like SAM-binding methyltransferase superfamily. rRNA adenine N(6)-methyltransferase family. RsmA subfamily.

The protein resides in the cytoplasm. It carries out the reaction adenosine(1518)/adenosine(1519) in 16S rRNA + 4 S-adenosyl-L-methionine = N(6)-dimethyladenosine(1518)/N(6)-dimethyladenosine(1519) in 16S rRNA + 4 S-adenosyl-L-homocysteine + 4 H(+). In terms of biological role, specifically dimethylates two adjacent adenosines (A1518 and A1519) in the loop of a conserved hairpin near the 3'-end of 16S rRNA in the 30S particle. May play a critical role in biogenesis of 30S subunits. The polypeptide is Ribosomal RNA small subunit methyltransferase A (Burkholderia ambifaria (strain MC40-6)).